Here is a 246-residue protein sequence, read N- to C-terminus: Small ribosomal subunit protein uS2 (246 aa).

Belongs to the universal ribosomal protein uS2 family.

This Pseudomonas paraeruginosa (strain DSM 24068 / PA7) (Pseudomonas aeruginosa (strain PA7)) protein is Small ribosomal subunit protein uS2.